A 723-amino-acid polypeptide reads, in one-letter code: Nucleolar protein 11 (723 aa).

The protein resides in the nucleus. It localises to the nucleolus. Its function is as follows. Ribosome biogenesis factor. May be required for both optimal rDNA transcription and pre-rRNA processing. This chain is Nucleolar protein 11 (NOL11), found in Gallus gallus (Chicken).